Here is a 620-residue protein sequence, read N- to C-terminus: Translocator protein BipB (620 aa).

Residues Gln-58–Arg-95 form a disordered region. Residues His-66–Ala-84 show a composition bias toward basic and acidic residues. Residues Glu-309–Met-339 are a coiled coil. A run of 3 helical transmembrane segments spans residues Phe-355–Leu-375, Ala-401–Cys-421, and Leu-430–Val-450.

The protein belongs to the SctE/SipB/YopB family.

The protein resides in the secreted. It is found in the host membrane. Functionally, plays a role in the bacterium-induced formation of multinucleated giant cell (MNGC), which is formed after host cell fusion, as well as in the intercellular spreading of bacteria and in the induction of apoptosis in macrophages. May act in concert with other effector proteins to induce fusion of host cell membranes. This chain is Translocator protein BipB (bipB), found in Burkholderia mallei (strain NCTC 10247).